A 579-amino-acid polypeptide reads, in one-letter code: uncharacterized protein (579 aa).

Residues 449 to 577 (QKGVFILVDI…GKNRLMIHDS (129 aa)) form the GGDEF domain.

This is an uncharacterized protein from Bacillus subtilis (strain 168).